The primary structure comprises 474 residues: tRNA-2-methylthio-N(6)-dimethylallyladenosine synthase (474 aa).

Residues 3-120 form the MTTase N-terminal domain; the sequence is QKLHIKTWGC…LPEMINQIRG (118 aa). The [4Fe-4S] cluster site is built by C12, C49, C83, C157, C161, and C164. Residues 143-375 enclose the Radical SAM core domain; the sequence is RAEGPTAFVS…QERINQQAAQ (233 aa). The TRAM domain maps to 378–441; the sequence is RRMLGTEQRV…TNSLRGEVVR (64 aa).

This sequence belongs to the methylthiotransferase family. MiaB subfamily. Monomer. [4Fe-4S] cluster serves as cofactor.

It is found in the cytoplasm. The catalysed reaction is N(6)-dimethylallyladenosine(37) in tRNA + (sulfur carrier)-SH + AH2 + 2 S-adenosyl-L-methionine = 2-methylsulfanyl-N(6)-dimethylallyladenosine(37) in tRNA + (sulfur carrier)-H + 5'-deoxyadenosine + L-methionine + A + S-adenosyl-L-homocysteine + 2 H(+). Catalyzes the methylthiolation of N6-(dimethylallyl)adenosine (i(6)A), leading to the formation of 2-methylthio-N6-(dimethylallyl)adenosine (ms(2)i(6)A) at position 37 in tRNAs that read codons beginning with uridine. This is tRNA-2-methylthio-N(6)-dimethylallyladenosine synthase from Haemophilus influenzae (strain PittEE).